Consider the following 197-residue polypeptide: Large ribosomal subunit protein eL15 (197 aa).

Positions 163–172 (GKTSAGRKGR) are enriched in basic residues. Positions 163-197 (GKTSAGRKGRGMQTRGTGTEKTRPSVRSNLNRSKK) are disordered. The span at 186-197 (PSVRSNLNRSKK) shows a compositional bias: polar residues.

Belongs to the eukaryotic ribosomal protein eL15 family.

This Methanococcoides burtonii (strain DSM 6242 / NBRC 107633 / OCM 468 / ACE-M) protein is Large ribosomal subunit protein eL15.